We begin with the raw amino-acid sequence, 408 residues long: Digeranylgeranylglycerophospholipid reductase 1 (408 aa).

The FAD site is built by A15, E34, C45, A46, G48, R99, V123, D279, G291, and I292.

Belongs to the geranylgeranyl reductase family. DGGGPL reductase subfamily. Requires FAD as cofactor.

The enzyme catalyses a 2,3-bis-O-phytanyl-sn-glycerol 1-phospholipid + 8 oxidized 2[4Fe-4S]-[ferredoxin] = a 2,3-bis-O-(geranylgeranyl)-sn-glycerol 1-phospholipid + 8 reduced 2[4Fe-4S]-[ferredoxin] + 16 H(+). The catalysed reaction is 2,3-bis-O-(phytanyl)-sn-glycerol 1-phosphate + 8 oxidized 2[4Fe-4S]-[ferredoxin] = 2,3-bis-O-(geranylgeranyl)-sn-glycerol 1-phosphate + 8 reduced 2[4Fe-4S]-[ferredoxin] + 16 H(+). It catalyses the reaction a 2,3-bis-O-phytanyl-sn-glycerol 1-phospholipid + 8 A = a 2,3-bis-O-(geranylgeranyl)-sn-glycerol 1-phospholipid + 8 AH2. It carries out the reaction CDP-2,3-bis-O-(geranylgeranyl)-sn-glycerol + 8 AH2 = CDP-2,3-bis-O-(phytanyl)-sn-glycerol + 8 A. The enzyme catalyses archaetidylserine + 8 AH2 = 2,3-bis-O-phytanyl-sn-glycero-3-phospho-L-serine + 8 A. The protein operates within membrane lipid metabolism; glycerophospholipid metabolism. Functionally, is involved in the reduction of 2,3-digeranylgeranylglycerophospholipids (unsaturated archaeols) into 2,3-diphytanylglycerophospholipids (saturated archaeols) in the biosynthesis of archaeal membrane lipids. Catalyzes the formation of archaetidic acid (2,3-di-O-phytanyl-sn-glyceryl phosphate) from 2,3-di-O-geranylgeranylglyceryl phosphate (DGGGP) via the hydrogenation of each double bond of the isoprenoid chains. Is also probably able to reduce double bonds of geranyl groups in CDP-2,3-bis-O-(geranylgeranyl)-sn-glycerol and archaetidylserine, thus acting at various stages in the biosynthesis of archaeal membrane lipids. In Methanococcoides burtonii (strain DSM 6242 / NBRC 107633 / OCM 468 / ACE-M), this protein is Digeranylgeranylglycerophospholipid reductase 1.